Consider the following 346-residue polypeptide: MSPYISPLFSITMIMSVMLISSSGHWVFMWLGLELGTLAFIPILVWWHSSLEVEATVKYFIVQAMAAAVFFLGGMVSLSGDFMGGVNQLMGNIGDMMIMLAVVTKLGLAPFHYWVVDVVQGLNYIPGAVLLTWQKVPGLAVLTQLATCNNSSMLLLFGMVSALVGGLGGLGQTQMRKLLAFSSISHLGWLVVGCVAGSLLGLSYFTLYVILSIPLFSILHMLNGGHLNQLRTGLMFNPLMSVLLGVGFLSLGGLPPFFGFFGKWLLLTHFVGQLLLGVSVVLITGTLISLFYYLRVSYLCIVVLGPQQIMSGLNWRKMQLSGLMSGLLVLNMLGLFLVGGASCLPK.

11 helical membrane passes run 1 to 21 (MSPY…MLIS), 26 to 46 (WVFM…ILVW), 60 to 80 (FIVQ…SLSG), 96 to 116 (MMIM…YWVV), 122 to 142 (LNYI…LAVL), 151 to 171 (SSML…GGLG), 178 to 198 (LLAF…VAGS), 199 to 219 (LLGL…FSIL), 242 to 262 (VLLG…GFFG), 274 to 294 (LLLG…FYYL), and 320 to 340 (LSGL…LVGG).

Belongs to the complex I subunit 2 family.

The protein resides in the mitochondrion inner membrane. The enzyme catalyses a ubiquinone + NADH + 5 H(+)(in) = a ubiquinol + NAD(+) + 4 H(+)(out). Functionally, core subunit of the mitochondrial membrane respiratory chain NADH dehydrogenase (Complex I) that is believed to belong to the minimal assembly required for catalysis. Complex I functions in the transfer of electrons from NADH to the respiratory chain. The immediate electron acceptor for the enzyme is believed to be ubiquinone. The chain is NADH-ubiquinone oxidoreductase chain 2 (ND2) from Branchiostoma lanceolatum (Common lancelet).